Consider the following 427-residue polypeptide: Trigger factor (427 aa).

In terms of domain architecture, PPIase FKBP-type spans 163–248 (GDTVVIDFVG…IHEVKEKEVP (86 aa)).

The protein belongs to the FKBP-type PPIase family. Tig subfamily.

The protein localises to the cytoplasm. It catalyses the reaction [protein]-peptidylproline (omega=180) = [protein]-peptidylproline (omega=0). Involved in protein export. Acts as a chaperone by maintaining the newly synthesized protein in an open conformation. Functions as a peptidyl-prolyl cis-trans isomerase. The sequence is that of Trigger factor from Streptococcus gordonii (strain Challis / ATCC 35105 / BCRC 15272 / CH1 / DL1 / V288).